Here is a 185-residue protein sequence, read N- to C-terminus: Elongation factor P (185 aa).

The protein belongs to the elongation factor P family.

It localises to the cytoplasm. It participates in protein biosynthesis; polypeptide chain elongation. Functionally, involved in peptide bond synthesis. Stimulates efficient translation and peptide-bond synthesis on native or reconstituted 70S ribosomes in vitro. Probably functions indirectly by altering the affinity of the ribosome for aminoacyl-tRNA, thus increasing their reactivity as acceptors for peptidyl transferase. This is Elongation factor P from Bacillus pumilus (strain SAFR-032).